The following is a 144-amino-acid chain: Large ribosomal subunit protein uL11 (144 aa).

This sequence belongs to the universal ribosomal protein uL11 family. Part of the ribosomal stalk of the 50S ribosomal subunit. Interacts with L10 and the large rRNA to form the base of the stalk. L10 forms an elongated spine to which L12 dimers bind in a sequential fashion forming a multimeric L10(L12)X complex. One or more lysine residues are methylated.

Functionally, forms part of the ribosomal stalk which helps the ribosome interact with GTP-bound translation factors. This is Large ribosomal subunit protein uL11 from Corynebacterium glutamicum (strain R).